Reading from the N-terminus, the 206-residue chain is Protein DEHYDRATION-INDUCED 19 (206 aa).

T105 carries the post-translational modification Phosphothreonine. Residue S107 is modified to Phosphoserine. A disordered region spans residues 142–167; the sequence is SSFISPTRSQSSPAPRQTKNVSEDKQ. Polar residues predominate over residues 143–161; sequence SFISPTRSQSSPAPRQTKN.

Belongs to the Di19 family. In terms of assembly, interacts with ADO2/LKP2, CPK11 and CPK4. Weak interaction with CPK12 and no interactions with CPK1, CPK5 or CPK26. Phosphorylated within the NLS/NES region. In terms of tissue distribution, expressed in seedlings, roots, leaves, stems, flowers and siliques.

The protein localises to the nucleus. This Arabidopsis thaliana (Mouse-ear cress) protein is Protein DEHYDRATION-INDUCED 19 (DI19-1).